The primary structure comprises 39 residues: Bomanin Short 3 (39 aa).

An N-terminal signal peptide occupies residues 1–18 (MKFLSLAFVLGLLALANA). The propeptide occupies 19–23 (TPLNP). Cys32 and Cys35 are disulfide-bonded.

It belongs to the bomanin family. In terms of tissue distribution, hemolymph (at protein level).

The protein resides in the secreted. Secreted immune-induced peptide induced by Toll signaling. Has a role in resistance bacterial and fungal infections. The strength of antimicrobial activity appears to correlate with the overall level of expression. Has no activity against the fungus C.glabrata in vitro. The polypeptide is Bomanin Short 3 (Drosophila melanogaster (Fruit fly)).